Here is a 628-residue protein sequence, read N- to C-terminus: Glutamyl-tRNA(Gln) amidotransferase subunit E (628 aa).

It belongs to the GatB/GatE family. GatE subfamily. Heterodimer of GatD and GatE.

It carries out the reaction L-glutamyl-tRNA(Gln) + L-glutamine + ATP + H2O = L-glutaminyl-tRNA(Gln) + L-glutamate + ADP + phosphate + H(+). Allows the formation of correctly charged Gln-tRNA(Gln) through the transamidation of misacylated Glu-tRNA(Gln) in organisms which lack glutaminyl-tRNA synthetase. The reaction takes place in the presence of glutamine and ATP through an activated gamma-phospho-Glu-tRNA(Gln). The GatDE system is specific for glutamate and does not act on aspartate. The sequence is that of Glutamyl-tRNA(Gln) amidotransferase subunit E from Thermococcus gammatolerans (strain DSM 15229 / JCM 11827 / EJ3).